A 92-amino-acid chain; its full sequence is Small ribosomal subunit protein uS19 (92 aa).

The protein belongs to the universal ribosomal protein uS19 family.

Functionally, protein S19 forms a complex with S13 that binds strongly to the 16S ribosomal RNA. The chain is Small ribosomal subunit protein uS19 from Mycoplasmopsis agalactiae (strain NCTC 10123 / CIP 59.7 / PG2) (Mycoplasma agalactiae).